The sequence spans 470 residues: Sulfate adenylyltransferase subunit 1 (470 aa).

The tr-type G domain occupies 22-238 (KELLRFITCG…ETIKIDYAYT (217 aa)). The segment at 31 to 38 (GSVDDGKS) is G1. A GTP-binding site is contributed by 31-38 (GSVDDGKS). Residues 89–93 (GITID) form a G2 region. Residues 110 to 113 (DTPG) are G3. GTP is bound by residues 110-114 (DTPGH) and 165-168 (NKMD). Residues 165–168 (NKMD) form a G4 region. Positions 202–204 (SAL) are G5.

Belongs to the TRAFAC class translation factor GTPase superfamily. Classic translation factor GTPase family. CysN/NodQ subfamily. As to quaternary structure, heterodimer composed of CysD, the smaller subunit, and CysN.

It catalyses the reaction sulfate + ATP + H(+) = adenosine 5'-phosphosulfate + diphosphate. It functions in the pathway sulfur metabolism; hydrogen sulfide biosynthesis; sulfite from sulfate: step 1/3. Functionally, with CysD forms the ATP sulfurylase (ATPS) that catalyzes the adenylation of sulfate producing adenosine 5'-phosphosulfate (APS) and diphosphate, the first enzymatic step in sulfur assimilation pathway. APS synthesis involves the formation of a high-energy phosphoric-sulfuric acid anhydride bond driven by GTP hydrolysis by CysN coupled to ATP hydrolysis by CysD. In Francisella tularensis subsp. tularensis (strain WY96-3418), this protein is Sulfate adenylyltransferase subunit 1.